The sequence spans 272 residues: MSSATVLDSIIEGVRADVAAREAVVSLTEIKERAQRAKPPLDVMAALREPGIGVIAEVKRASPSRGALAQIGDPADLARAYQDGGARVISVLTEQRRFNGSLDDLDAVRAAVSIPVLRKDFIVRPYQIHEARAHGADMLLLIVAALEQPVLESLLERTESLGMTALVEVHTEAEADRALQAGARVIGVNARNLKTLEVDRDCFARIAPGLPSNVIRIAESGVRGPADLLAYAGAGADAVLVGEGLVTSRDPRSAVADLVTAGTHPSCPKPSR.

This sequence belongs to the TrpC family.

The enzyme catalyses 1-(2-carboxyphenylamino)-1-deoxy-D-ribulose 5-phosphate + H(+) = (1S,2R)-1-C-(indol-3-yl)glycerol 3-phosphate + CO2 + H2O. The protein operates within amino-acid biosynthesis; L-tryptophan biosynthesis; L-tryptophan from chorismate: step 4/5. This Mycobacterium sp. (strain JLS) protein is Indole-3-glycerol phosphate synthase.